The chain runs to 390 residues: Flavohemoprotein (390 aa).

S2 bears the N-acetylserine mark. A Globin domain is found at 12–149; it reads PLTPTEINFL…LAQTLIDAEA (138 aa). Heme b is bound at residue H96. Residues Y106 and E148 each act as charge relay system in the active site. A reductase region spans residues 157–390; that stretch reads WEEFKDFRVT…EFFGPTDPDC (234 aa). The FAD-binding FR-type domain occupies 158 to 263; that stretch reads EEFKDFRVTK…HAPVGTMKYD (106 aa). FAD-binding positions include Y196 and 214-217; that span reads REYS. 277–282 serves as a coordination point for NADP(+); sequence GIGITP. FAD is bound at residue 382-385; that stretch reads FFGP.

Belongs to the globin family. Two-domain flavohemoproteins subfamily. The protein in the C-terminal section; belongs to the flavoprotein pyridine nucleotide cytochrome reductase family. Requires FAD as cofactor. Heme b is required as a cofactor.

It localises to the cytoplasm. It catalyses the reaction 2 nitric oxide + NADPH + 2 O2 = 2 nitrate + NADP(+) + H(+). It carries out the reaction 2 nitric oxide + NADH + 2 O2 = 2 nitrate + NAD(+) + H(+). Is involved in NO detoxification in an aerobic process, termed nitric oxide dioxygenase (NOD) reaction that utilizes O(2) and NAD(P)H to convert NO to nitrate, which protects the fungus from various noxious nitrogen compounds. Therefore, plays a central role in the inducible response to nitrosative stress. In terms of biological role, in the presence of oxygen and NADH, it has NADH oxidase activity, which leads to the generation of superoxide and H(2)O(2). Under anaerobic conditions, it also exhibits nitric oxide reductase and FAD reductase activities. However, all these reactions are much lower than NOD activity. The polypeptide is Flavohemoprotein (Candida norvegensis (Yeast)).